The chain runs to 91 residues: Small ribosomal subunit protein uS19 (91 aa).

The protein belongs to the universal ribosomal protein uS19 family.

Functionally, protein S19 forms a complex with S13 that binds strongly to the 16S ribosomal RNA. The chain is Small ribosomal subunit protein uS19 from Azoarcus sp. (strain BH72).